The sequence spans 478 residues: MTTFVDRVELHAAAGNGGHGCASVHREKFKPLGGPDGGNGGRGGDVILVVEQSVTTLLDYHHSPHRKATNGQPGAGDNRSGKDGQDLVLPVPDGTVVLDKAGNVLADLVGQGTTFVAGQGGRGGLGNAALASARRKAPGFALLGEPGESRDIVLELKTVADVALVGYPSAGKSSLISVLSAAKPKIADYPFTTLVPNLGVVTAGSTVYTIADVPGLIPGASQGKGLGLEFLRHVERCSVLVHVLDTATLESDRDPVSDLDMIEEELRLYGGLENRPRIVALNKVDIPDGQDLADMIRPDLEARGYRVFEVSAIAHKGLKELSFALAGIIAEARATKPKEEATRIVIRPRAVDDAGFTVTLEDDGIYRVRGEKPERWVRQTDFNNDEAVGYLADRLNRLGVEDSLMKAGARAGDGVAIGPEENAVVFDWEPTVTAGAEMLGRRGEDHRLEEPRPAAQRRRERDAERDDAEKEYDEFDPF.

One can recognise an Obg domain in the interval 2 to 159 (TTFVDRVELH…RDIVLELKTV (158 aa)). Residues 61 to 87 (HHSPHRKATNGQPGAGDNRSGKDGQDL) are disordered. An OBG-type G domain is found at 160–330 (ADVALVGYPS…LSFALAGIIA (171 aa)). Residues 166–173 (GYPSAGKS), 191–195 (FTTLV), 212–215 (DVPG), 282–285 (NKVD), and 311–313 (SAI) contribute to the GTP site. Residues S173 and T193 each contribute to the Mg(2+) site. One can recognise an OCT domain in the interval 348 to 430 (PRAVDDAGFT…ENAVVFDWEP (83 aa)). The segment at 436-478 (AEMLGRRGEDHRLEEPRPAAQRRRERDAERDDAEKEYDEFDPF) is disordered. The segment covering 439-468 (LGRRGEDHRLEEPRPAAQRRRERDAERDDA) has biased composition (basic and acidic residues). Positions 469–478 (EKEYDEFDPF) are enriched in acidic residues.

This sequence belongs to the TRAFAC class OBG-HflX-like GTPase superfamily. OBG GTPase family. As to quaternary structure, monomer. Requires Mg(2+) as cofactor.

It is found in the cytoplasm. Its function is as follows. An essential GTPase which binds GTP, GDP and possibly (p)ppGpp with moderate affinity, with high nucleotide exchange rates and a fairly low GTP hydrolysis rate. Plays a role in control of the cell cycle, stress response, ribosome biogenesis and in those bacteria that undergo differentiation, in morphogenesis control. This chain is GTPase Obg, found in Streptomyces griseus subsp. griseus (strain JCM 4626 / CBS 651.72 / NBRC 13350 / KCC S-0626 / ISP 5235).